We begin with the raw amino-acid sequence, 569 residues long: Urease subunit alpha (569 aa).

In terms of domain architecture, Urease spans 131–569 (GGIDAHIHFI…VPMAQRYFLF (439 aa)). Positions 136, 138, and 219 each coordinate Ni(2+). Lysine 219 is modified (N6-carboxylysine). Histidine 221 is a substrate binding site. 2 residues coordinate Ni(2+): histidine 248 and histidine 274. Catalysis depends on histidine 322, which acts as the Proton donor. Position 362 (aspartate 362) interacts with Ni(2+).

Belongs to the metallo-dependent hydrolases superfamily. Urease alpha subunit family. In terms of assembly, heterotrimer of UreA (gamma), UreB (beta) and UreC (alpha) subunits. Three heterotrimers associate to form the active enzyme. Requires Ni cation as cofactor. Post-translationally, carboxylation allows a single lysine to coordinate two nickel ions.

The protein localises to the cytoplasm. It catalyses the reaction urea + 2 H2O + H(+) = hydrogencarbonate + 2 NH4(+). It functions in the pathway nitrogen metabolism; urea degradation; CO(2) and NH(3) from urea (urease route): step 1/1. The protein is Urease subunit alpha of Bacillus sp. (strain TB-90).